Here is a 291-residue protein sequence, read N- to C-terminus: ATP synthase gamma chain (291 aa).

The protein belongs to the ATPase gamma chain family. F-type ATPases have 2 components, CF(1) - the catalytic core - and CF(0) - the membrane proton channel. CF(1) has five subunits: alpha(3), beta(3), gamma(1), delta(1), epsilon(1). CF(0) has three main subunits: a, b and c.

The protein localises to the cell inner membrane. Functionally, produces ATP from ADP in the presence of a proton gradient across the membrane. The gamma chain is believed to be important in regulating ATPase activity and the flow of protons through the CF(0) complex. This is ATP synthase gamma chain from Syntrophus aciditrophicus (strain SB).